The sequence spans 333 residues: Homeobox protein Hox-D13 (333 aa).

The interval 1-24 (MDGLRTDGGAAGAAPASSSSSSSV) is disordered. Residues 12–24 (GAAPASSSSSSSV) show a composition bias toward low complexity. Positions 266–325 (GRKKRVPYTKLQLKELENEYAINKFINKDKRRRISAATNLSERQVTIWFQNRRVKDKKIV) form a DNA-binding region, homeobox.

The protein belongs to the Abd-B homeobox family.

It is found in the nucleus. Its function is as follows. Sequence-specific transcription factor that binds gene promoters and activates their transcription. Part of a developmental regulatory system that provides cells with specific positional identities on the anterior-posterior axis. This Carollia perspicillata (Seba's short-tailed bat) protein is Homeobox protein Hox-D13 (HOXD13).